The sequence spans 365 residues: Metallophosphoesterase 1 homolog (365 aa).

A helical membrane pass occupies residues 10–30; that stretch reads PILLAIILVVYNEYFIFFIAF. A divalent metal cation contacts are provided by Asp54, Asp96, Asn132, His208, His262, and His264. Residues 319–339 traverse the membrane as a helical segment; that stretch reads ILQIMVYIFGGIGIVILAFIL.

The protein belongs to the metallophosphoesterase superfamily. MPPE1 family. Mn(2+) is required as a cofactor.

It is found in the endoplasmic reticulum-Golgi intermediate compartment membrane. The protein localises to the golgi apparatus. Its subcellular location is the cis-Golgi network membrane. In terms of biological role, metallophosphoesterase required for transport of GPI-anchor proteins from the endoplasmic reticulum to the Golgi. Acts in lipid remodeling steps of GPI-anchor maturation by mediating the removal of a side-chain ethanolamine-phosphate (EtNP) from the second Man (Man2) of the GPI intermediate, an essential step for efficient transport of GPI-anchor proteins. The sequence is that of Metallophosphoesterase 1 homolog from Caenorhabditis elegans.